Reading from the N-terminus, the 739-residue chain is Phosphoribosylformylglycinamidine synthase subunit PurL (739 aa).

His-53 is a catalytic residue. Residues Tyr-56 and Lys-95 each coordinate ATP. Position 97 (Glu-97) interacts with Mg(2+). Substrate contacts are provided by residues 98-101 (SHNH) and Arg-120. His-99 acts as the Proton acceptor in catalysis. Asp-121 is a Mg(2+) binding site. Gln-244 provides a ligand contact to substrate. Residue Asp-274 coordinates Mg(2+). A substrate-binding site is contributed by 318-320 (ESQ). 2 residues coordinate ATP: Asp-501 and Gly-538. Mg(2+) is bound at residue Asn-539. A substrate-binding site is contributed by Ser-541.

This sequence belongs to the FGAMS family. In terms of assembly, monomer. Part of the FGAM synthase complex composed of 1 PurL, 1 PurQ and 2 PurS subunits.

It is found in the cytoplasm. The enzyme catalyses N(2)-formyl-N(1)-(5-phospho-beta-D-ribosyl)glycinamide + L-glutamine + ATP + H2O = 2-formamido-N(1)-(5-O-phospho-beta-D-ribosyl)acetamidine + L-glutamate + ADP + phosphate + H(+). The protein operates within purine metabolism; IMP biosynthesis via de novo pathway; 5-amino-1-(5-phospho-D-ribosyl)imidazole from N(2)-formyl-N(1)-(5-phospho-D-ribosyl)glycinamide: step 1/2. Part of the phosphoribosylformylglycinamidine synthase complex involved in the purines biosynthetic pathway. Catalyzes the ATP-dependent conversion of formylglycinamide ribonucleotide (FGAR) and glutamine to yield formylglycinamidine ribonucleotide (FGAM) and glutamate. The FGAM synthase complex is composed of three subunits. PurQ produces an ammonia molecule by converting glutamine to glutamate. PurL transfers the ammonia molecule to FGAR to form FGAM in an ATP-dependent manner. PurS interacts with PurQ and PurL and is thought to assist in the transfer of the ammonia molecule from PurQ to PurL. The polypeptide is Phosphoribosylformylglycinamidine synthase subunit PurL (Listeria monocytogenes serotype 4b (strain CLIP80459)).